Reading from the N-terminus, the 505-residue chain is Alpha-internexin (505 aa).

The head stretch occupies residues 1 to 87 (MSFGSEHYLC…SQAAARTNEY (87 aa)). S72 carries the post-translational modification Phosphoserine. A coil 1A region spans residues 88–129 (KIIRTNEKEQLQGLNDRFAVFIEKVHQLETQNRALEAELAAL). The 314-residue stretch at 94–407 (EKEQLQGLND…KLLEGEETRF (314 aa)) folds into the IF rod domain. The interval 130 to 142 (RQRHAEPSRVGEL) is linker 1. The interval 143-238 (FQRELRELRA…QVHDEEVAEL (96 aa)) is coil 1B. Residue S219 is modified to Phosphoserine. Positions 239 to 262 (LATLQASSQAAAEVDVAVAKPDLT) are linker 2. Residues 263 to 408 (SALREIRAQY…LLEGEETRFS (146 aa)) are coil 2. The residue at position 290 (K290) is an N6-acetyllysine. Phosphoserine is present on residues S335, S474, and S502. The tail stretch occupies residues 409-505 (TSGLSISGLN…EITTSSSQKM (97 aa)). A disordered region spans residues 438–505 (KVSSAGLSLK…EITTSSSQKM (68 aa)). Residues 495–505 (EEITTSSSQKM) show a composition bias toward low complexity.

This sequence belongs to the intermediate filament family. Forms homodimers (in vitro). Forms heterodimers with NEFL, NEFM or NEFH (in vitro). In terms of processing, O-glycosylated. As to expression, expressed in the dorsal root ganglion neurons (at protein level).

Its function is as follows. Class-IV neuronal intermediate filament that is able to self-assemble. It is involved in the morphogenesis of neurons. It may form an independent structural network without the involvement of other neurofilaments or it may cooperate with NEFL to form the filamentous backbone to which NEFM and NEFH attach to form the cross-bridges. May also cooperate with the neuronal intermediate filament protein PRPH to form filamentous networks. The chain is Alpha-internexin (Ina) from Rattus norvegicus (Rat).